Reading from the N-terminus, the 618-residue chain is Chaperone protein HtpG (618 aa).

The interval 1-331 (MAKHTFQTEV…SEDLPLNVSR (331 aa)) is a; substrate-binding. The segment at 332–541 (EILQQNRILA…EDDPNFAMIK (210 aa)) is b. The tract at residues 542–618 (MMRQMGNALG…RLNAMLERAI (77 aa)) is c.

This sequence belongs to the heat shock protein 90 family. In terms of assembly, homodimer.

The protein localises to the cytoplasm. Its function is as follows. Molecular chaperone. Has ATPase activity. The chain is Chaperone protein HtpG from Wolinella succinogenes (strain ATCC 29543 / DSM 1740 / CCUG 13145 / JCM 31913 / LMG 7466 / NCTC 11488 / FDC 602W) (Vibrio succinogenes).